A 456-amino-acid chain; its full sequence is tRNA-2-methylthio-N(6)-dimethylallyladenosine synthase (456 aa).

The 118-residue stretch at 19–136 (LTFNVQTFGC…LAELIYARHT (118 aa)) folds into the MTTase N-terminal domain. Positions 28, 63, 97, 173, 177, and 180 each coordinate [4Fe-4S] cluster. One can recognise a Radical SAM core domain in the interval 159 to 389 (QKYKFKAGVN…LTTIRESSSK (231 aa)). The TRAM domain maps to 392-455 (KDDEGKIAEV…GFYYMGEMME (64 aa)).

The protein belongs to the methylthiotransferase family. MiaB subfamily. Monomer. It depends on [4Fe-4S] cluster as a cofactor.

It is found in the cytoplasm. The enzyme catalyses N(6)-dimethylallyladenosine(37) in tRNA + (sulfur carrier)-SH + AH2 + 2 S-adenosyl-L-methionine = 2-methylsulfanyl-N(6)-dimethylallyladenosine(37) in tRNA + (sulfur carrier)-H + 5'-deoxyadenosine + L-methionine + A + S-adenosyl-L-homocysteine + 2 H(+). Catalyzes the methylthiolation of N6-(dimethylallyl)adenosine (i(6)A), leading to the formation of 2-methylthio-N6-(dimethylallyl)adenosine (ms(2)i(6)A) at position 37 in tRNAs that read codons beginning with uridine. The sequence is that of tRNA-2-methylthio-N(6)-dimethylallyladenosine synthase from Lachnoclostridium phytofermentans (strain ATCC 700394 / DSM 18823 / ISDg) (Clostridium phytofermentans).